Here is a 341-residue protein sequence, read N- to C-terminus: Serine/threonine-protein kinase-like protein At5g23170 (341 aa).

Residues 16 to 298 (FSPSKLIGKG…FGEITAEIVA (283 aa)) form the Protein kinase domain. Residues 22 to 30 (IGKGSHGYV) and Lys51 contribute to the ATP site. The interval 52–75 (TPSSLSPSSPSSSSSSKSEQTKKL) is disordered. Residues 53–69 (PSSLSPSSPSSSSSSKS) show a composition bias toward low complexity. Asp153 acts as the Proton acceptor in catalysis. The stretch at 311-332 (MSVLRRVVKLKRRKKRLRETLT) forms a coiled coil.

It belongs to the protein kinase superfamily. Ser/Thr protein kinase family. In terms of tissue distribution, ubiquitous. Higher expression in mature stamina and pollen.

The catalysed reaction is L-seryl-[protein] + ATP = O-phospho-L-seryl-[protein] + ADP + H(+). The enzyme catalyses L-threonyl-[protein] + ATP = O-phospho-L-threonyl-[protein] + ADP + H(+). The polypeptide is Serine/threonine-protein kinase-like protein At5g23170 (Arabidopsis thaliana (Mouse-ear cress)).